A 403-amino-acid polypeptide reads, in one-letter code: tRNA pseudouridine synthase 4 (403 aa).

Residue Asp75 is the Nucleophile of the active site.

It belongs to the pseudouridine synthase TruB family.

The protein resides in the nucleus. It is found in the mitochondrion. It carries out the reaction uridine(55) in tRNA = pseudouridine(55) in tRNA. It catalyses the reaction a uridine in mRNA = a pseudouridine in mRNA. Its function is as follows. Responsible for synthesis of pseudouridine from uracil-55 in the psi GC loop of transfer RNAs. Also catalyzes pseudouridylation of mRNAs with the consensus sequence 5'-GGUUCRA-3'. The polypeptide is tRNA pseudouridine synthase 4 (PUS4) (Saccharomyces cerevisiae (strain ATCC 204508 / S288c) (Baker's yeast)).